The primary structure comprises 628 residues: Probable potassium transport system protein Kup (628 aa).

A run of 12 helical transmembrane segments spans residues 15-35 (LAIAAIGVVFGDIGTSPLYSL), 55-75 (VISLLFWAIVIVVGVKYVLFV), 104-124 (AGLLMMLGIFGACMFYGDAVI), 142-162 (PHLSHLVLPLTIVILILLFWI), 173-193 (LFGPIMVLWFVVLAALGLWHI), 210-230 (TFMAAHVLQAYVVLGSVVLVL), 252-272 (WYVLVMPSLVLNYFGQGALLM), 281-301 (PFFLLAPDWALLPLVVLSTIA), 342-362 (IYVPVVNWMLLFIILCIVIAF), 372-392 (YGIAVTATMVITTILACVVMV), 400-420 (LLVALIIGVFMTVDLGFFGAN), and 426-446 (EGGWLPLGIGALLFFLLMTWY).

Belongs to the HAK/KUP transporter (TC 2.A.72) family.

It localises to the cell inner membrane. The enzyme catalyses K(+)(in) + H(+)(in) = K(+)(out) + H(+)(out). Functionally, transport of potassium into the cell. Likely operates as a K(+):H(+) symporter. This is Probable potassium transport system protein Kup from Paraburkholderia xenovorans (strain LB400).